The chain runs to 3672 residues: Laminin-like protein epi-1 (3672 aa).

The first 27 residues, M1–S27, serve as a signal peptide directing secretion. Positions Q28–R297 constitute a Laminin N-terminal domain. N-linked (GlcNAc...) asparagine glycans are attached at residues N121, N140, and N249. 43 disulfides stabilise this stretch: C298–C307, C300–C320, C322–C331, C334–C354, C357–C366, C359–C391, C394–C403, C406–C424, C427–C438, C429–C445, C447–C456, C459–C469, C472–C484, C474–C491, C493–C502, C505–C516, C519–C531, C521–C538, C540–C549, C552–C561, C564–C576, C566–C583, C585–C594, C597–C607, C610–C622, C612–C629, C631–C640, C643–C653, C656–C668, C658–C674, C676–C685, C688–C698, C701–C715, C703–C724, C726–C735, C738–C753, C756–C770, C758–C777, C779–C788, C791–C806, C809–C821, C811–C828, and C830–C839. Laminin EGF-like domains lie at C298–A356, C357–V426, C427–P471, C472–E518, C519–F563, C564–A609, C610–G655, C656–E700, C701–S755, and C756–S808. N351 carries N-linked (GlcNAc...) asparagine glycosylation. The N-linked (GlcNAc...) asparagine glycan is linked to N477. 2 N-linked (GlcNAc...) asparagine glycosylation sites follow: N511 and N530. A glycan (N-linked (GlcNAc...) asparagine) is linked at N634. An N-linked (GlcNAc...) asparagine glycan is attached at N761. The 31-residue stretch at C809–C839 folds into the Laminin EGF-like 11; truncated domain. N1014 and N1341 each carry an N-linked (GlcNAc...) asparagine glycan. Cystine bridges form between C1415–C1427, C1417–C1434, C1436–C1445, C1448–C1458, C1461–C1469, C1463–C1476, C1478–C1487, C1490–C1503, C1506–C1520, C1508–C1527, C1529–C1538, C1541–C1551, C1554–C1566, C1556–C1573, C1575–C1584, and C1587–C1602. 4 Laminin EGF-like domains span residues C1415–K1460, C1461–K1505, C1506–G1553, and C1554–N1604. The Laminin EGF-like 16; first part domain occupies C1605 to C1614. One can recognise a Laminin IV type A domain in the interval R1615–Q1796. N-linked (GlcNAc...) asparagine glycans are attached at residues N1705 and N1756. One can recognise a Laminin EGF-like 16; second part domain in the interval C1797 to P1829. Intrachain disulfides connect C1830–C1839, C1832–C1846, C1849–C1858, C1861–C1877, C1880–C1894, C1882–C1905, C1907–C1916, C1919–C1934, C1937–C1951, C1939–C1958, C1961–C1970, C1973–C1987, C1990–C2000, C1992–C2007, C2009–C2018, C2021–C2031, C2037–C2048, C2039–C2055, C2057–C2066, C2069–C2081, C2084–C2096, C2086–C2103, C2105–C2114, and C2117–C2129. Laminin EGF-like domains are found at residues C1830–A1879, C1880–P1936, C1937–S1989, C1990–G2036, C2037–K2083, and C2084–R2131. The N-linked (GlcNAc...) asparagine glycan is linked to N1868. A glycan (N-linked (GlcNAc...) asparagine) is linked at N1944. The N-linked (GlcNAc...) asparagine glycan is linked to N1986. N2002 carries N-linked (GlcNAc...) asparagine glycosylation. N-linked (GlcNAc...) asparagine glycosylation is found at N2159, N2207, N2231, N2235, N2401, N2421, N2487, and N2821. 3 consecutive Laminin G-like domains span residues G2693–A2884, E2896–C3066, and R3072–C3235. Cysteines 3040 and 3066 form a disulfide. N3087 carries N-linked (GlcNAc...) asparagine glycosylation. C3209 and C3235 form a disulfide bridge. The disordered stretch occupies residues S3236 to H3294. N3242 is a glycosylation site (N-linked (GlcNAc...) asparagine). Low complexity predominate over residues T3271–E3280. 2 consecutive Laminin G-like domains span residues G3310–C3482 and P3488–C3669. C3460 and C3482 are disulfide-bonded. An N-linked (GlcNAc...) asparagine glycan is attached at N3541. Residues C3633 and C3669 are joined by a disulfide bond.

Laminin is a complex glycoprotein, consisting of three different polypeptide chains (alpha, beta, gamma), which are bound to each other by disulfide bonds into a cross-shaped molecule comprising one long and three short arms with globules at each end.

The protein resides in the secreted. It is found in the extracellular space. It localises to the extracellular matrix. Its subcellular location is the basement membrane. Binding to cells via a high affinity receptor, laminin is thought to mediate the attachment, migration and organization of cells into tissues during embryonic development by interacting with other extracellular matrix components. Required to assemble a stable basement membrane and for organizing receptor complexes and cytoskeletal components to the proper cell surfaces. During embryogenesis, does not require the presence of collagen type IV in order to associate with cell surfaces, prior to assembly of the prototypical basement membrane. During the formation of neuromuscular junctions at the larval stage, negatively regulates membrane protrusion from body wall muscles, probably downstream of the integrin complex formed by pat-2 and pat-3. Probably plays a distinct role from the related laminin subunit alpha lam-3. The polypeptide is Laminin-like protein epi-1 (epi-1) (Caenorhabditis elegans).